Reading from the N-terminus, the 211-residue chain is Large ribosomal subunit protein uL3 (211 aa).

The segment at 122-157 (NQKRNNFGRGPMSHGSKNHRAPGSIGAGTTPGRVYP) is disordered.

The protein belongs to the universal ribosomal protein uL3 family. As to quaternary structure, part of the 50S ribosomal subunit. Forms a cluster with proteins L14 and L19.

One of the primary rRNA binding proteins, it binds directly near the 3'-end of the 23S rRNA, where it nucleates assembly of the 50S subunit. In Trichormus variabilis (strain ATCC 29413 / PCC 7937) (Anabaena variabilis), this protein is Large ribosomal subunit protein uL3.